The following is a 208-amino-acid chain: Uracil phosphoribosyltransferase (208 aa).

Residues Arg-78, Arg-103, and 130 to 138 (DPMLATGGS) contribute to the 5-phospho-alpha-D-ribose 1-diphosphate site. Residues Ile-193 and 198–200 (GDA) each bind uracil. Asp-199 provides a ligand contact to 5-phospho-alpha-D-ribose 1-diphosphate.

It belongs to the UPRTase family. The cofactor is Mg(2+).

The catalysed reaction is UMP + diphosphate = 5-phospho-alpha-D-ribose 1-diphosphate + uracil. The protein operates within pyrimidine metabolism; UMP biosynthesis via salvage pathway; UMP from uracil: step 1/1. Allosterically activated by GTP. Catalyzes the conversion of uracil and 5-phospho-alpha-D-ribose 1-diphosphate (PRPP) to UMP and diphosphate. The sequence is that of Uracil phosphoribosyltransferase from Shewanella sp. (strain ANA-3).